Consider the following 100-residue polypeptide: Small ribosomal subunit protein uS14 (100 aa).

The protein belongs to the universal ribosomal protein uS14 family. Part of the 30S ribosomal subunit. Contacts proteins S3 and S10.

Binds 16S rRNA, required for the assembly of 30S particles and may also be responsible for determining the conformation of the 16S rRNA at the A site. The sequence is that of Small ribosomal subunit protein uS14 from Nostoc sp. (strain PCC 7120 / SAG 25.82 / UTEX 2576).